The sequence spans 357 residues: 5-hydroxytryptamine receptor 5A (357 aa).

The Extracellular portion of the chain corresponds to 1 to 36 (MDLPINLTSFSLSTPSTLEPNRSLDTEALRTSQSFL). Residues N6 and N21 are each glycosylated (N-linked (GlcNAc...) asparagine). A helical transmembrane segment spans residues 37–63 (SAFRVLVLTLLGFLAAATFTWNLLVLA). The Cytoplasmic portion of the chain corresponds to 64 to 76 (TILRVRTFHRVPH). A helical transmembrane segment spans residues 77–103 (NLVASMAISDVLVAVLVMPLSLVHELS). Residues 104–114 (GRRWQLGRRLC) lie on the Extracellular side of the membrane. Cysteines 114 and 192 form a disulfide. The helical transmembrane segment at 115–137 (QLWIACDVLCCTASIWNVTAIAL) threads the bilayer. Residue D121 coordinates serotonin. Residues 138–155 (DRYWSITRHLEYTLRARK) lie on the Cytoplasmic side of the membrane. The helical transmembrane segment at 156-176 (RVSNVMILLTWALSAVISLAP) threads the bilayer. Residues 177–198 (LLFGWGETYSELSEECQVSREP) lie on the Extracellular side of the membrane. Residues 199 to 220 (SYTVFSTVGAFYLPLCVVLFVY) form a helical membrane-spanning segment. The Cytoplasmic portion of the chain corresponds to 221–287 (WKIYKAAKFR…QKEQRAALMV (67 aa)). A helical transmembrane segment spans residues 288-312 (GILIGVFVLCWFPFFVTELISPLCS). Topologically, residues 313 to 314 (WD) are extracellular. Residues 315-339 (IPALWKSIFLWLGYSNSFFNPLIYT) traverse the membrane as a helical segment. The Cytoplasmic segment spans residues 340-357 (AFNRSYSSAFKVFFSKQQ).

The protein belongs to the G-protein coupled receptor 1 family. In terms of tissue distribution, central nervous system.

It is found in the cell membrane. In terms of biological role, G-protein coupled receptor for 5-hydroxytryptamine (serotonin), a biogenic hormone that functions as a neurotransmitter, a hormone and a mitogen. Also functions as a receptor for ergot alkaloid derivatives and other psychoactive substances. Ligand binding causes a conformation change that triggers signaling via guanine nucleotide-binding proteins (G proteins) and modulates the activity of downstream effectors. Htr5a is coupled to G(i)/G(o) G alpha proteins and mediates inhibitory neurotransmission: signaling inhibits adenylate cyclase activity and activates a phosphatidylinositol-calcium second messenger system that regulates the release of Ca(2+) ions from intracellular stores. This chain is 5-hydroxytryptamine receptor 5A, found in Rattus norvegicus (Rat).